Consider the following 126-residue polypeptide: Ribosome-binding factor A (126 aa).

Belongs to the RbfA family. In terms of assembly, monomer. Binds 30S ribosomal subunits, but not 50S ribosomal subunits or 70S ribosomes.

Its subcellular location is the cytoplasm. Functionally, one of several proteins that assist in the late maturation steps of the functional core of the 30S ribosomal subunit. Associates with free 30S ribosomal subunits (but not with 30S subunits that are part of 70S ribosomes or polysomes). Required for efficient processing of 16S rRNA. May interact with the 5'-terminal helix region of 16S rRNA. This chain is Ribosome-binding factor A, found in Thermosipho africanus (strain TCF52B).